The following is a 207-amino-acid chain: MTAVQAARRARIERRTKESDIVIELDLDGTGRVDVETGVPFYDHMLTALGSHASFDLTVRTTGDVEIEAHHTIEDTAIALGAALGQALGDKRGIRRFGDAFIPMDETLAHAAVDVSGRPYCVHSGEPDHLQHSTIAGSSVPYHTVINRHVFESLAMNARIALHVRVLYGRDPHHITEAQYKAVARALRQAVEPDPRVSDVPSTKGVL.

Belongs to the imidazoleglycerol-phosphate dehydratase family.

The protein resides in the cytoplasm. It carries out the reaction D-erythro-1-(imidazol-4-yl)glycerol 3-phosphate = 3-(imidazol-4-yl)-2-oxopropyl phosphate + H2O. The protein operates within amino-acid biosynthesis; L-histidine biosynthesis; L-histidine from 5-phospho-alpha-D-ribose 1-diphosphate: step 6/9. The sequence is that of Imidazoleglycerol-phosphate dehydratase from Mycobacterium avium (strain 104).